The sequence spans 533 residues: MSSLVSEIARRRTFAIISHPDAGKTTLTEKLLWFGGAIQVAGEVRARKADRHATSDWMELEKQRGISVTSSVMQFPYRRETADGKAQENIVNLLDTPGHEDFSEDTYRTLTAVDSAVMVIDSVNGVEAQTIKLLNVCRLRDTPILTFINKLDREGRSPIELLDEIEEVLQIQCAPMTWPIGMGKAFRGVYHLINDKVQLFDPHGEKGTAAILDGLDNPELDRILGSQAEELRIEIELVRGASHTFDKDAFLNGKQTPVYFGSAINNFGVQSLLDALCELSPPPLARNTDSRVVEPQEPKFTGFVFKIQANMDPRHRDRIAFVRVCSGRFERGMKLLHVSAGKTVAINNAITFMAQDRNTTEEAYAGDIIGVPNHGTIRLGDVFTEGEPLKFTGIPSFAPEFFRRARLNNPLKVKQLQKGLQQLAEEGATQMFRPLASNDLVLGAVGILQFDVVAHRLEHEYGVDAIFESHECATARWLKGTPAEIEKLIAKAGHNVALDGAGDHVYLAPSMVNLRLTQERFPELQFMETREIV.

One can recognise a tr-type G domain in the interval 9-284; that stretch reads ARRRTFAIIS…ALCELSPPPL (276 aa). Residues 18–25, 95–99, and 149–152 contribute to the GTP site; these read SHPDAGKT, DTPGH, and NKLD.

Belongs to the TRAFAC class translation factor GTPase superfamily. Classic translation factor GTPase family. PrfC subfamily.

It localises to the cytoplasm. Its function is as follows. Increases the formation of ribosomal termination complexes and stimulates activities of RF-1 and RF-2. It binds guanine nucleotides and has strong preference for UGA stop codons. It may interact directly with the ribosome. The stimulation of RF-1 and RF-2 is significantly reduced by GTP and GDP, but not by GMP. The chain is Peptide chain release factor 3 from Cupriavidus necator (strain ATCC 17699 / DSM 428 / KCTC 22496 / NCIMB 10442 / H16 / Stanier 337) (Ralstonia eutropha).